Reading from the N-terminus, the 192-residue chain is uncharacterized protein (192 aa).

One can recognise a Nudix hydrolase domain in the interval Q29 to H160. The Nudix box signature appears at G67–A89. E83 and E87 together coordinate Mg(2+).

The protein belongs to the Nudix hydrolase family. PCD1 subfamily. Mn(2+) serves as cofactor. It depends on Mg(2+) as a cofactor.

Probably mediates the hydrolysis of some nucleoside diphosphate derivatives. This is an uncharacterized protein from Cronobacter sakazakii (strain ATCC BAA-894) (Enterobacter sakazakii).